A 94-amino-acid polypeptide reads, in one-letter code: Neutrophil defensin 1 (94 aa).

A signal peptide spans 1 to 19 (MRTLAILAAILLVALQAQA). A propeptide spanning residues 20 to 64 (EPLQARADEVAAAPEQIPADNPEVVVSLAWDESLAPKHPGSRKNV) is cleaved from the precursor. Cystine bridges form between Cys66-Cys94, Cys68-Cys83, and Cys73-Cys93. An ADP-ribosylarginine; by ART1 modification is found at Arg78. Phosphotyrosine is present on Tyr85. At Arg88 the chain carries ADP-ribosylarginine; by ART1.

This sequence belongs to the alpha-defensin family. In terms of assembly, tetramer. Dimer. Interacts with RETN. Post-translationally, ADP-ribosylation drastically reduces cytotoxic and antibacterial activities, and enhances IL8 production.

It localises to the secreted. In terms of biological role, effector molecule of the innate immune system that acts via antibiotic-like properties against a broad array of infectious agents including bacteria, fungi, and viruses or by promoting the activation and maturation of some APCs. Interacts with the essential precursor of cell wall synthesis lipid II to inhibit bacterial cell wall synthesis. Inhibits adenovirus infection via inhibition of viral disassembly at the vertex region, thereby restricting the release of internal capsid protein pVI, which is required for endosomal membrane penetration during cell entry. In addition, interaction with adenovirus capsid leads to the redirection of viral particles to TLR4 thereby promoting a NLRP3-mediated inflammasome response and interleukin 1-beta (IL-1beta) release. Induces the production of proinflammatory cytokines including type I interferon (IFN) in plasmacytoid dendritic cells (pDCs) by triggering the degradation of NFKBIA and nuclear translocation of IRF1, both of which are required for activation of pDCs. This is Neutrophil defensin 1 (DEFA1) from Pan troglodytes (Chimpanzee).